The primary structure comprises 857 residues: Potassium channel AKT1 (857 aa).

Residues 1–61 (MRGGALLCGQ…PYDHKYRIWE (61 aa)) lie on the Cytoplasmic side of the membrane. The chain crosses the membrane as a helical span at residues 62–82 (AFLVVLVVYTAWVSPFEFGFL). At 83–90 (RKPRPPLS) the chain is on the extracellular side. A helical transmembrane segment spans residues 91-111 (ITDNIVNAFFAIDIIMTFFVG). Topologically, residues 112 to 134 (YLDKSTYLIVDDRKQIAFKYLRS) are cytoplasmic. A helical membrane pass occupies residues 135-155 (WFLLDLVSTIPSEAAMRISSQ). At 156-158 (SYG) the chain is on the extracellular side. Residues 159–179 (LFNMLRLWRLRRVGALFARLE) form a helical; Voltage-sensor membrane-spanning segment. Over 180–193 (KDRNFNYFWVRCAK) the chain is Cytoplasmic. A helical membrane pass occupies residues 194–214 (LVCVTLFAVHCAACFYYLIAA). The Extracellular portion of the chain corresponds to 215 to 241 (RNSNPAKTWIGANVANFLEESLWMRYV). An intramembrane region (pore-forming) is located at residues 242 to 261 (TSMYWSITTLTTVGYGDLHP). Residues 262–265 (VNTK) are Extracellular-facing. Residues 266 to 286 (EMIFDIFYMLFNLGLTAYLIG) form a helical membrane-spanning segment. The Cytoplasmic portion of the chain corresponds to 287–857 (NMTNLVVHGT…GDHLIFATDS (571 aa)). Position 372–493 (372–493 (LFRGVSNDLL…IMNNLLQHLK (122 aa))) interacts with a nucleoside 3',5'-cyclic phosphate. ANK repeat units lie at residues 515-546 (KMDL…DPNE), 550-579 (NGRT…DPNC), 583-612 (EGSV…TIDA), 614-643 (DVGH…DVTR), 647-676 (TGTS…DVNK), and 680-709 (HGWT…ERRV). Residues 790–857 (RVTISCAEKD…GDHLIFATDS (68 aa)) enclose the KHA domain.

It belongs to the potassium channel family. Plant (TC 1.A.1.4) subfamily. In terms of assembly, the potassium channel is probably composed of a homo- or heterotetrameric complex of pore-forming subunits. Possible heteromultimer with AKT2 or KAT3. Part of a K(+)-channel calcium-sensing kinase/phosphatase complex composed by a calcium sensor CBL (CBL1, CBL2, CBL3 or CBL9), a kinase CIPK (CIPK6, CIPK16 or CIPK23), a phosphatase PP2C (AIP1) and a K(+)-channel (AKT1). Interacts directly with AIP1, CBL10, CIPK6, CIPK16 and CIPK23. Post-translationally, phosphorylated by CIPK proteins CIPK6, CIPK16 and CIPK23. The activation by phosphorylation is induced by low K(+) conditions and stimulates K(+) uptake and relocation. Dephosphorylation by AIP1 repressed the transport activity. As to expression, preferentially expressed in the peripheral cell layers of root mature including root cortex and root hairs. Detected also, at a lower level, in the mesophyll of the leaves and at restricted sites corresponding to hydathodes and guard cells.

It is found in the cell membrane. Its function is as follows. Highly selective inward-rectifying potassium channel that mediate potassium uptake by plant roots in response to low K(+) conditions, by a calcium-, CBL-, and CIPK-dependent pathway. Positively regulated by phosphorylation by CIPK23. Negatively regulated by a kinase-independent regulatory mechanism involving a competing direct binding of CBL10. Involved in the stomatal regulation by monitoring the turgor pressure in guard cells. Assuming opened or closed conformations in response to the voltage difference across the membrane, the channel is activated by hyperpolarization. May interact with the cytoskeleton or with regulatory proteins. Is essential with POT5/HAK5 for high-affinity potassium uptake in roots during seedling establishment and postgermination growth under low potassium conditions. The protein is Potassium channel AKT1 (AKT1) of Arabidopsis thaliana (Mouse-ear cress).